The primary structure comprises 832 residues: Protein PPP4R3C (832 aa).

A disordered region spans residues 708–832 (RTQEGEAVMP…SPKKKPHLSS (125 aa)). Basic and acidic residues-rich tracts occupy residues 725–735 (FTETKRTHQEG) and 749–765 (METKRNQEHEGKVDSPK). A compositionally biased stretch (low complexity) spans 769 to 779 (SGDFKFSSSYS). Positions 801-820 (PDDEEEKEEDEEEKEEDKED) are enriched in acidic residues.

This sequence belongs to the SMEK family.

This chain is Protein PPP4R3C, found in Homo sapiens (Human).